Consider the following 127-residue polypeptide: Single-stranded DNA-binding protein 2 (127 aa).

The region spanning 4 to 103 (INKVMLVGRC…ITINTIELLG (100 aa)) is the SSB domain. The disordered stretch occupies residues 104-127 (SPRKEESTSTSAPNETQAVANANF). Residues 111–127 (TSTSAPNETQAVANANF) are compositionally biased toward polar residues.

As to quaternary structure, homotetramer.

The protein is Single-stranded DNA-binding protein 2 (ssb2) of Nostoc sp. (strain PCC 7120 / SAG 25.82 / UTEX 2576).